We begin with the raw amino-acid sequence, 285 residues long: Involucrin (285 aa).

Disordered regions lie at residues 1–93, 120–256, and 266–285; these read MSQQ…QEQK, LEQQ…AQVQ, and LPLI…PEHQ. The span at 27-39 shows a compositional bias: polar residues; it reads IDTQQEQVKQPTS. 3 stretches are compositionally biased toward low complexity: residues 72-87, 120-129, and 137-147; these read EQQC…QKQQ, LEQQQEQQES, and EQCLEQQQEQQ. Basic and acidic residues-rich tracts occupy residues 149-165, 175-185, and 200-233; these read SQEK…KEEL, EQCEKHQEAKN, and QQKE…KEEQ. Residues 235–248 show a composition bias toward low complexity; that stretch reads LEQQGQQEGQLEQP. Over residues 272–285 the composition is skewed to basic and acidic residues; the sequence is QHQKQEVHDPPEHQ.

Belongs to the involucrin family. Directly or indirectly cross-linked to cornifelin (CNFN). Post-translationally, substrate of transglutaminase. Specific glutamines or lysines are cross-linked to keratins, desmoplakin and to inter involucrin molecules. As to expression, keratinocytes of epidermis and other stratified squamous epithelia.

It is found in the cytoplasm. Its function is as follows. Part of the insoluble cornified cell envelope (CE) of stratified squamous epithelia. The polypeptide is Involucrin (IVL) (Canis lupus familiaris (Dog)).